We begin with the raw amino-acid sequence, 807 residues long: Tyrosine-protein phosphatase non-receptor type 22 (807 aa).

Residues 24–289 (FANEFLKLKR…ELVYNAVLEL (266 aa)) enclose the Tyrosine-protein phosphatase domain. At S35 the chain carries Phosphoserine; by PKC/PRKCD. C129 and C227 form a disulfide bridge. The active-site Phosphocysteine intermediate is the C227. Substrate is bound by residues 227 to 233 (CSAGCGR) and Q274. Phosphoserine occurs at positions 449, 635, 684, and 692. 2 disordered regions span residues 676–700 (SVKL…LPER) and 724–746 (SYPD…GKSF).

Belongs to the protein-tyrosine phosphatase family. Non-receptor class 4 subfamily. As to quaternary structure, interacts with CSK. Interacts with LPXN. Interacts with CBL. Interacts with TRAF3 (via MATH domain); the interaction promotes TRAF3 polyubiquitination. Post-translationally, phosphorylation on Ser-35 by PKC/PRKCD abrogates its ability to dephosphorylate and inactivate the SRC family kinases. As to expression, expressed in bone marrow, B and T-cells, PBMCs, natural killer cells, monocytes, dendritic cells and neutrophils. Both isoform 1 and 4 are predominantly expressed in lymphoid tissues and cells. Isoform 1 is expressed in thymocytes and both mature B and T-cells.

The protein localises to the cytoplasm. The catalysed reaction is O-phospho-L-tyrosyl-[protein] + H2O = L-tyrosyl-[protein] + phosphate. It catalyses the reaction N-(5Z,8Z,11Z,14Z-eicosatetraenoyl)-ethanolamine phosphate + H2O = N-(5Z,8Z,11Z,14Z-eicosatetraenoyl)-ethanolamine + phosphate. Down-regulated by phosphorylation. In terms of biological role, acts as a negative regulator of T-cell receptor (TCR) signaling by direct dephosphorylation of the Src family kinases LCK and FYN, ITAMs of the TCRz/CD3 complex, as well as ZAP70, VAV, VCP and other key signaling molecules. Associates with and probably dephosphorylates CBL. Dephosphorylates LCK at its activating 'Tyr-394' residue. Dephosphorylates ZAP70 at its activating 'Tyr-493' residue. Dephosphorylates the immune system activator SKAP2. Positively regulates toll-like receptor (TLR)-induced type 1 interferon production. Promotes host antiviral responses mediated by type 1 interferon. Regulates NOD2-induced pro-inflammatory cytokine secretion and autophagy. Acts as an activator of NLRP3 inflammasome assembly by mediating dephosphorylation of 'Tyr-861' of NLRP3. Dephosphorylates phospho-anandamide (p-AEA), an endocannabinoid to anandamide (also called N-arachidonoylethanolamide). In Homo sapiens (Human), this protein is Tyrosine-protein phosphatase non-receptor type 22 (PTPN22).